Consider the following 465-residue polypeptide: Ras GTPase-activating protein-binding protein 1 (465 aa).

The 123-residue stretch at 11–133 (VGREFVRQYY…FYVHNDIFRY (123 aa)) folds into the NTF2 domain. Glycyl lysine isopeptide (Lys-Gly) (interchain with G-Cter in ubiquitin) cross-links involve residues lysine 36, lysine 50, lysine 59, lysine 64, lysine 76, and lysine 123. Positions 142 to 224 (ITEPQEESEE…EPVLEETAPE (83 aa)) are acidic disordered region. Position 143 is a phosphothreonine (threonine 143). 2 stretches are compositionally biased toward acidic residues: residues 145-157 (PQEE…EEPE) and 184-205 (EHLE…EQEP). A disordered region spans residues 145–242 (PQEESEEEVE…APADIAQTVQ (98 aa)). Position 149 is a phosphoserine (serine 149). A phosphoserine mark is found at serine 230, serine 231, serine 249, and serine 252. Residues 254–326 (TSKNLPPSGA…PVREAGEQGD (73 aa)) form a disordered region. Composition is skewed to basic and acidic residues over residues 296-306 (PQRDQRVREQR) and 317-326 (PVREAGEQGD). Residues 339 to 414 (HQLFIGNLPH…VRLNVEEKKT (76 aa)) enclose the RRM domain. Glycyl lysine isopeptide (Lys-Gly) (interchain with G-Cter in ubiquitin) cross-links involve residues lysine 352 and lysine 356. Serine 372 carries the post-translational modification Phosphoserine. Lysine 375 participates in a covalent cross-link: Glycyl lysine isopeptide (Lys-Gly) (interchain with G-Cter in ubiquitin). Lysine 375 is subject to N6-acetyllysine; alternate. A Glycyl lysine isopeptide (Lys-Gly) (interchain with G-Cter in SUMO2); alternate cross-link involves residue lysine 375. Lysine 392 participates in a covalent cross-link: Glycyl lysine isopeptide (Lys-Gly) (interchain with G-Cter in ubiquitin); alternate. Positions 409–465 (VEEKKTRAAREGDRRDNRLRGPGGPRGGLGGGMRGPPRGGMVQKPGFGVGRSIAPRQ) are RG-rich region. Positions 412–427 (KKTRAAREGDRRDNRL) are enriched in basic and acidic residues. Residues 412 to 465 (KKTRAAREGDRRDNRLRGPGGPRGGLGGGMRGPPRGGMVQKPGFGVGRSIAPRQ) are disordered. Arginine 428 carries the asymmetric dimethylarginine modification. The segment covering 429–446 (GPGGPRGGLGGGMRGPPR) has biased composition (gly residues). Position 434 is an asymmetric dimethylarginine; alternate (arginine 434). Residues arginine 434, arginine 446, arginine 459, and arginine 464 each carry the omega-N-methylarginine; alternate modification. Dimethylated arginine; alternate is present on arginine 459.

As to quaternary structure, homodimer and oligomer. Component of a TAU mRNP complex, at least composed of IGF2BP1, ELAVL4 and G3BP1. Binds to the SH3 domain of Ras GTPase-activating protein (RASA1) in proliferating cells. No interaction in quiescent cells. Interacts (via NTF2 domain) with USP10; inhibiting stress granule formation by lowering G3BP1 valence. Interacts (via NTF2 domain) with CAPRIN1; promoting stress granule formation by lowering the saturation-concentration of G3BP1. Interacts (via NTF2 domain) with UBAP2L; promoting stress granule formation. Associates (via RG-rich region) with 40S ribosome subunits. Interacts with RPTOR and SPAG5; this complex is increased by oxidative stress. Interacts with ATXN2L. Interacts with STYXL1. Interacts with CGAS (via N-terminus); this interaction promotes the DNA-binding and activation of CGAS. Interacts (via C-terminus) with RIGI. Interacts with PABPC1. Interacts with QKI (isoforms QKI6 and QKI7); directing N(7)-methylguanine-containing mRNAs to stress granules. Mg(2+) serves as cofactor. Phosphorylation of the acidic disordered region regulates stress granule assembly. RASA1-dependent phosphorylation of Ser-149 induces a conformational change that prevents self-association. Dephosphorylation after HRAS activation is required for stress granule assembly. Ser-149 phosphorylation induces partial nuclear localization. Post-translationally, arg-435 is dimethylated, probably to asymmetric dimethylarginine. In terms of processing, ubiquitinated by TRIM21 via 'Lys-63'-linked polyubiquitination in the NTF2 domain in response to heat shock, leading to stress granule disassembly: ubiquitination promotes interaction with the FAF2 adapter, followed by interaction with VCP, which extracts G3BP1 from stress granules, leading to stress granule disassembly. In case of prolonged stress, ubiquitination by TRIM21 leads to autophagy-dependent degradation of G3BP1 via recruitment of ubiquitinated G3BP1 by SQSTM1 and/or CALCOCO2 to autophagosomes.

The protein localises to the cytoplasm. It is found in the cytosol. The protein resides in the perikaryon. Its subcellular location is the stress granule. It localises to the nucleus. The enzyme catalyses ATP + H2O = ADP + phosphate + H(+). With respect to regulation, under physiological conditions, G3BP1 adopts a compact state that is stabilized by intramolecular interactions between the RG-rich and the acidic regions that inhibit phase separation. Upon stress, polysomes disassemble and mRNAs are released in an unfolded protein-free state. Binding of unfolded mRNA to G3BP1 outcompetes the intramolecular interactions and RNA-bound G3BP1 adopts an expanded conformation in which the RG-rich region becomes exposed to engage in protein-protein and protein-RNA interactions, allowing physical cross-linking of RNA molecules to form protein-RNA condensates, leading to liquid-liquid phase separation (LLPS). Protein involved in various processes, such as stress granule formation and innate immunity. Plays an essential role in stress granule formation. Stress granules are membraneless compartments that store mRNAs and proteins, such as stalled translation pre-initiation complexes, in response to stress. Promotes formation of stress granules phase-separated membraneless compartment by undergoing liquid-liquid phase separation (LLPS) upon unfolded RNA-binding: functions as a molecular switch that triggers RNA-dependent LLPS in response to a rise in intracellular free RNA concentrations. Also acts as an ATP- and magnesium-dependent helicase: unwinds DNA/DNA, RNA/DNA, and RNA/RNA substrates with comparable efficiency. Acts unidirectionally by moving in the 5' to 3' direction along the bound single-stranded DNA. Unwinds preferentially partial DNA and RNA duplexes having a 17 bp annealed portion and either a hanging 3' tail or hanging tails at both 5'- and 3'-ends. Plays an essential role in innate immunity by promoting CGAS and RIGI activity. Participates in the DNA-triggered cGAS/STING pathway by promoting the DNA binding and activation of CGAS. Triggers the condensation of cGAS, a process probably linked to the formation of membrane-less organelles. Also enhances RIGI-induced type I interferon production probably by helping RIGI at sensing pathogenic RNA. May also act as a phosphorylation-dependent sequence-specific endoribonuclease in vitro: Cleaves exclusively between cytosine and adenine and cleaves MYC mRNA preferentially at the 3'-UTR. The polypeptide is Ras GTPase-activating protein-binding protein 1 (G3BP1) (Bos taurus (Bovine)).